Reading from the N-terminus, the 859-residue chain is Protein FAM171A1 (859 aa).

Residues 1–20 (MSGSTAVALLFCVLSCSVWG) form the signal peptide. The Extracellular segment spans residues 21 to 307 (AGSKASHEHN…VTQDITSYHT (287 aa)). N163, N194, and N198 each carry an N-linked (GlcNAc...) asparagine glycan. A helical membrane pass occupies residues 308–328 (IFLLAILGGIAFILLVLLCIL). The Cytoplasmic segment spans residues 329–859 (LYYCRRKCLK…ERPLLAFNKK (531 aa)). Disordered regions lie at residues 397 to 421 (SRDFGSREELLSHQEEKSRMSLDNL), 484 to 509 (TNHVTAGSKPNIQEQMHPVPSAPEPE), and 771 to 859 (QSPS…FNKK). Positions 400 to 416 (FGSREELLSHQEEKSRM) are enriched in basic and acidic residues. Composition is skewed to polar residues over residues 484–497 (TNHVTAGSKPNIQE) and 797–806 (SGSQTPSLQE). Basic and acidic residues predominate over residues 838–852 (GENKKSPWQKREERP).

This sequence belongs to the FAM171 family.

It localises to the cell membrane. Its function is as follows. May be involved in the regulation of the cytoskeletal dynamics, plays a role in actin stress fiber formation. The protein is Protein FAM171A1 (fam171a1) of Xenopus laevis (African clawed frog).